A 138-amino-acid chain; its full sequence is Vesicle transport protein GOT1B (138 aa).

At methionine 1 the chain carries N-acetylmethionine. The Cytoplasmic portion of the chain corresponds to 1-9 (MISLTDTQK). Residues 10–30 (IGMGLTGFGVFFLFFGMILFF) traverse the membrane as a helical segment. Topologically, residues 31 to 32 (DK) are lumenal. The helical transmembrane segment at 33–53 (ALLAIGNVLFVAGLAFVIGLE) threads the bilayer. At 54-68 (RTFRFFFQRHKVKAT) the chain is on the cytoplasmic side. Residue glutamate 90 is a topological domain, lumenal. The helical transmembrane segment at 91–109 (IYGFFLLFRGFFPVVVGFI) threads the bilayer. Topologically, residues 110–138 (RRVPVLGSLLNLPGIRSFVDKVGESNNMV) are cytoplasmic.

Belongs to the GOT1 family.

The protein resides in the golgi apparatus membrane. Functionally, may be involved in fusion of ER-derived transport vesicles with the Golgi complex. In Mus musculus (Mouse), this protein is Vesicle transport protein GOT1B (Golt1b).